The primary structure comprises 125 residues: Prepro-urotensin II-alpha (125 aa).

An N-terminal signal peptide occupies residues 1 to 21 (MMCNLLLSFSVLLLSCTHLVA). Positions 109-111 (QFR) are excised as a propeptide. A disulfide bond links Cys119 and Cys124.

The protein belongs to the urotensin-2 family.

The protein localises to the secreted. Functionally, urotensin is found in the teleost caudal neurosecretory system. It has a suggested role in osmoregulation and as a corticotropin-releasing factor. The non-hormonal portion of this precursor may be a urotensin binding protein, urophysin. The sequence is that of Prepro-urotensin II-alpha from Cyprinus carpio (Common carp).